The chain runs to 60 residues: Metallothionein A (60 aa).

Positions 1–28 are beta; it reads MDPCQCSKSGTCNCGGSCTCTNCSCKSC. Residues C4, C6, C12, C14, C18, C20, C23, C25, C28, C32, C33, C35, C36, C40, C43, C47, C49, C54, C58, and C59 each coordinate a divalent metal cation. The alpha stretch occupies residues 29 to 60; that stretch reads KKSCCPCCPSGCTKCASGCVCKGKTCDTSCCQ.

This sequence belongs to the metallothionein superfamily. Type 1 family.

Its function is as follows. Metallothioneins have a high content of cysteine residues that bind various heavy metals. The chain is Metallothionein A (mta) from Trematomus bernacchii (Emerald rockcod).